Consider the following 86-residue polypeptide: MATKKAGGSSRNGRDSAGRRLGVKKADGQYVIPGNIIVRQRGTKIHPGMNVGLGKDHTIFALIEGRVEFLTKRNHKIVNVNEIAST.

The tract at residues 1 to 22 (MATKKAGGSSRNGRDSAGRRLG) is disordered.

This sequence belongs to the bacterial ribosomal protein bL27 family.

This chain is Large ribosomal subunit protein bL27, found in Rickettsia peacockii (strain Rustic).